We begin with the raw amino-acid sequence, 260 residues long: UPF0246 protein APP7_0648 (260 aa).

This sequence belongs to the UPF0246 family.

This Actinobacillus pleuropneumoniae serotype 7 (strain AP76) protein is UPF0246 protein APP7_0648.